Here is a 1229-residue protein sequence, read N- to C-terminus: MEEKTKTVPFYKLFSFSDSTDVLLMIVGSIGAIGNGVGFPLMTLLFGDLIDSIGQNQSNKDIVEIVSKVCLKFVYLGLGTLGAAFLQVACWMITGERQAARIRSLYLKTILRQDIGFFDVETSTGEVVGRMSGDTVLILEAMGEKVGKFIQLIATFVGGFVLAFVKGWLLTLVMLVSIPLLAIAGAAMPIIVTRASSREQAAYAKASTVVEQTLGSIRTVASFTGEKQAMKSYREFINLAYRASVKQGFSMGLGLGVVFFVFFCSYALAIWFGGEMILKKGYTGGEVVNVMVTVVASSMSLGQTTPCLTAFAAGKAAAYKMFETIERKPSIDAFDLNGKVLEDIRGEIELRDVCFSYPARPMEEVFGGFSLLIPSGATAALVGESGSGKSSVISLIERFYDPSSGSVLIDGVNLKEFQLKWIRGKIGLVSQEPVLFSSSIMENIGYGKENATVEEIQAAAKLANAANFIDKLPRGLETLVGEHGTQLSGGQKQRIAIARAILKDPRILLLDEATSALDAESERVVQEALDRVMMSRTTVIVAHRLSTVRNADMIAVIHRGKIVEEGSHSELLKDHEGAYAQLIRLQKIKKEPKRLESSNELRDRSINRGSSRNIRTRVHDDDSVSVLGLLGRQENTEISREQSRNVSITRIAALNKPETTILILGTLLGAVNGTIFPIFGILFAKVIEAFFKPPHDMKRDSRFWSMIFVLLGVASLIVYPMHTYLFAVAGGRLIQRIRVMCFEKVVHMEVGWFDDPENSSGTIGSRLSADAALIKTLVGDSLSLSVKNAAAAVSGLIIAFTASWKLAVIILVMIPLIGINGYLQIKFIKGFTADAKAKYEEASQVANDAVGSIRTVASFCAEEKVMEMYKKRCEDTIKSGIKQGLISGVGFGISFFVLYSVYASCFYVGARLVKAGRTNFNDVFQVFLALTMTAIGISQASSFAPDSSKAKGAAASIFGIIDGKSMIDSRDESGLVLENVKGDIELCHISFTYQTRPDVQIFRDLCFAIRAGQTVALVGESGSGKSTVISLLQRFYDPDSGHITLDRVELKKLQLKWVRQQMGLVGQEPVLFNDTIRSNIAYGKGGDEASEAEIIAAAELANAHGFISSIQQGYDTVVGERGIQLSGGQKQRVAIARAIVKEPKILLLDEATSALDAESERVVQDALDRVMVNRTTVVVAHRLSTIKNADVIAVVKNGVIVEKGTHETLINIEGGVYASLVQLHISASS.

A helical membrane pass occupies residues 22–42 (VLLMIVGSIGAIGNGVGFPLM). Positions 25-313 (MIVGSIGAIG…TTPCLTAFAA (289 aa)) constitute an ABC transmembrane type-1 1 domain. A glycan (N-linked (GlcNAc...) asparagine) is linked at Asn56. A run of 5 helical transmembrane segments spans residues 73–93 (FVYL…CWMI), 149–169 (FIQL…KGWL), 172–192 (LVML…PIIV), 252–272 (GLGL…AIWF), and 281–301 (GYTG…SMSL). The 237-residue stretch at 348–584 (IELRDVCFSY…HEGAYAQLIR (237 aa)) folds into the ABC transporter 1 domain. Residue 383–390 (GESGSGKS) coordinates ATP. An N-linked (GlcNAc...) asparagine glycan is attached at Asn450. Basic and acidic residues predominate over residues 594–606 (RLESSNELRDRSI). The disordered stretch occupies residues 594–614 (RLESSNELRDRSINRGSSRNI). Asn645 is a glycosylation site (N-linked (GlcNAc...) asparagine). The next 2 membrane-spanning stretches (helical) occupy residues 661 to 681 (ILIL…IFGI) and 706 to 726 (MIFV…TYLF). An ABC transmembrane type-1 2 domain is found at 662 to 949 (LILGTLLGAV…ASSFAPDSSK (288 aa)). N-linked (GlcNAc...) asparagine glycosylation is present at Asn758. Helical transmembrane passes span 797 to 817 (IIAF…IPLI), 888 to 908 (GVGF…CFYV), and 923 to 943 (VFQV…ASSF). The ABC transporter 2 domain maps to 984–1222 (IELCHISFTY…EGGVYASLVQ (239 aa)). Residue 1019–1026 (GESGSGKS) coordinates ATP. Residues Asn1073 and Asn1173 are each glycosylated (N-linked (GlcNAc...) asparagine).

This sequence belongs to the ABC transporter superfamily. ABCB family. Multidrug resistance exporter (TC 3.A.1.201) subfamily.

It localises to the membrane. The sequence is that of ABC transporter B family member 3 (ABCB3) from Arabidopsis thaliana (Mouse-ear cress).